Here is a 171-residue protein sequence, read N- to C-terminus: Skp-like protein (171 aa).

Positions 1–21 (MKKLLFSTFLLVLGSTSAAHA) are cleaved as a signal peptide.

The protein belongs to the Skp family.

In Chlamydia pneumoniae (Chlamydophila pneumoniae), this protein is Skp-like protein.